The sequence spans 134 residues: ATP synthase epsilon chain, chloroplastic (134 aa).

It belongs to the ATPase epsilon chain family. As to quaternary structure, F-type ATPases have 2 components, CF(1) - the catalytic core - and CF(0) - the membrane proton channel. CF(1) has five subunits: alpha(3), beta(3), gamma(1), delta(1), epsilon(1). CF(0) has three main subunits: a, b and c.

The protein localises to the plastid. It localises to the chloroplast thylakoid membrane. Functionally, produces ATP from ADP in the presence of a proton gradient across the membrane. The polypeptide is ATP synthase epsilon chain, chloroplastic (Phalaenopsis aphrodite subsp. formosana (Moth orchid)).